A 349-amino-acid chain; its full sequence is Probable dual-specificity RNA methyltransferase RlmN (349 aa).

Glu94 acts as the Proton acceptor in catalysis. The Radical SAM core domain maps to 100-321; the sequence is DEDRATLCVS…TQHGVFATIR (222 aa). A disulfide bond links Cys107 and Cys332. [4Fe-4S] cluster-binding residues include Cys114, Cys118, and Cys121. S-adenosyl-L-methionine is bound by residues 159-160, Ser191, 213-215, and His289; these read GE and SMH. Residue Cys332 is the S-methylcysteine intermediate of the active site.

It belongs to the radical SAM superfamily. RlmN family. The cofactor is [4Fe-4S] cluster.

Its subcellular location is the cytoplasm. It carries out the reaction adenosine(2503) in 23S rRNA + 2 reduced [2Fe-2S]-[ferredoxin] + 2 S-adenosyl-L-methionine = 2-methyladenosine(2503) in 23S rRNA + 5'-deoxyadenosine + L-methionine + 2 oxidized [2Fe-2S]-[ferredoxin] + S-adenosyl-L-homocysteine. It catalyses the reaction adenosine(37) in tRNA + 2 reduced [2Fe-2S]-[ferredoxin] + 2 S-adenosyl-L-methionine = 2-methyladenosine(37) in tRNA + 5'-deoxyadenosine + L-methionine + 2 oxidized [2Fe-2S]-[ferredoxin] + S-adenosyl-L-homocysteine. Specifically methylates position 2 of adenine 2503 in 23S rRNA and position 2 of adenine 37 in tRNAs. The protein is Probable dual-specificity RNA methyltransferase RlmN of Phocaeicola vulgatus (strain ATCC 8482 / DSM 1447 / JCM 5826 / CCUG 4940 / NBRC 14291 / NCTC 11154) (Bacteroides vulgatus).